We begin with the raw amino-acid sequence, 385 residues long: Histidinol-phosphate aminotransferase (385 aa).

The residue at position 230 (Lys230) is an N6-(pyridoxal phosphate)lysine.

The protein belongs to the class-II pyridoxal-phosphate-dependent aminotransferase family. Pyridoxal 5'-phosphate is required as a cofactor.

The enzyme catalyses L-histidinol phosphate + 2-oxoglutarate = 3-(imidazol-4-yl)-2-oxopropyl phosphate + L-glutamate. The protein operates within amino-acid biosynthesis; L-histidine biosynthesis; L-histidine from 5-phospho-alpha-D-ribose 1-diphosphate: step 7/9. The polypeptide is Histidinol-phosphate aminotransferase (Saccharomyces cerevisiae (strain ATCC 204508 / S288c) (Baker's yeast)).